Consider the following 544-residue polypeptide: Probable protein kinase UbiB (544 aa).

The 379-residue stretch at 123-501 folds into the Protein kinase domain; that stretch reads DFDIKPLASA…KRQQGTGKFL (379 aa). ATP contacts are provided by residues 129–137 and lysine 152; that span reads LASASIAQV. The Proton acceptor role is filled by aspartate 287. A run of 2 helical transmembrane segments spans residues 496 to 516 and 519 to 539; these read GTGKFLFGVGATLVVCSAIWI and QLEPLAIGSATIGVLCWLLSW.

The protein belongs to the ABC1 family. UbiB subfamily.

The protein resides in the cell inner membrane. It functions in the pathway cofactor biosynthesis; ubiquinone biosynthesis [regulation]. In terms of biological role, is probably a protein kinase regulator of UbiI activity which is involved in aerobic coenzyme Q (ubiquinone) biosynthesis. In Vibrio cholerae serotype O1 (strain ATCC 39315 / El Tor Inaba N16961), this protein is Probable protein kinase UbiB.